The chain runs to 1360 residues: Activating molecule in BECN1-regulated autophagy protein 1B (1360 aa).

3 WD repeats span residues 50-89 (DNPR…CLHS), 92-132 (GHRR…ESWF), and 134-174 (ESNV…AVVK). Over residues 249-258 (RSSGAQANDQ) the composition is skewed to polar residues. Disordered stretches follow at residues 249–277 (RSSG…FQYP), 315–364 (PTGL…NSAH), 412–490 (GVET…QRNN), 514–573 (ELER…RCRS), 587–616 (WERS…EDPG), 664–688 (PTVS…NPDE), and 754–796 (TLSN…MPRN). The span at 319–333 (QPSDSTQPQTQSGPS) shows a compositional bias: low complexity. The span at 350 to 361 (AFSSVFSGTAGN) shows a compositional bias: polar residues. A compositionally biased stretch (low complexity) spans 428–437 (SSSSMDLLSL). Composition is skewed to polar residues over residues 443 to 454 (GSSSSPIYTSAT) and 473 to 490 (DGTS…QRNN). Positions 590–607 (SGQTSSSSSSQEGPSWPL) are enriched in low complexity. Residues 754–768 (TLSNSQADSQSNNPS) show a composition bias toward polar residues. Acidic residues predominate over residues 775-784 (SDGDYEDIEE). Short sequence motifs (TQT motif) lie at residues 1109 to 1111 (TQT) and 1121 to 1123 (TQT). 2 disordered regions span residues 1120–1142 (ETQT…TSRH) and 1241–1360 (SQTS…LYGR). Composition is skewed to polar residues over residues 1129-1142 (SAST…TSRH) and 1241-1252 (SQTSVRTAQGGN). The segment covering 1278–1288 (APGPSGSSGAP) has biased composition (low complexity). Residues 1311–1321 (FGDRQPDDVQR) show a composition bias toward basic and acidic residues. Residues 1329–1347 (NMSNHSNNNNNDHSNSYSE) show a composition bias toward low complexity. Residues 1348 to 1360 (SRSRDYPDDLYGR) are compositionally biased toward basic and acidic residues.

It belongs to the WD repeat AMBRA1 family. Component of the DCX(AMBRA1) E3 ubiquitin ligase complex.

It localises to the endoplasmic reticulum. It is found in the cytoplasm. The protein resides in the cytoskeleton. The protein localises to the cytoplasmic vesicle. Its subcellular location is the autophagosome. It localises to the mitochondrion. It is found in the cytosol. The protein resides in the nucleus. The protein localises to the cell junction. Its subcellular location is the focal adhesion. It participates in protein modification; protein ubiquitination. Functionally, substrate-recognition component of a DCX (DDB1-CUL4-X-box) E3 ubiquitin-protein ligase complex involved in cell cycle control and autophagy. The DCX(AMBRA1) complex specifically mediates the polyubiquitination of target proteins. Acts as an upstream master regulator of the transition from G1 to S cell phase: ambra1b specifically recognizes and binds phosphorylated cyclin-D (ccnd1, ccnd2 and ccnd3), leading to cyclin-D ubiquitination by the DCX(AMBRA1) complex and subsequent degradation. Acts as a regulator of Cul5-RING (CRL5) E3 ubiquitin-protein ligase complexes by mediating ubiquitination and degradation of Elongin-C (eloc) component of CRL5 complexes. Acts as a key regulator of autophagy by modulating the BECN1-PIK3C3 complex: controls protein turnover during neuronal development, and regulates normal cell survival and proliferation. In normal conditions, ambra1b is tethered to the cytoskeleton via interaction with dyneins light chains. Upon autophagy induction, ambra1b is released from the cytoskeletal docking site to induce autophagosome nucleation by mediating ubiquitination of proteins involved in autophagy. Also acts as an activator of mitophagy. Required for skeletal muscle development. The polypeptide is Activating molecule in BECN1-regulated autophagy protein 1B (Danio rerio (Zebrafish)).